The sequence spans 306 residues: GTPase Era (306 aa).

Residues 13-181 (YCGFIAIVGR…EKIVRESLHE (169 aa)) enclose the Era-type G domain. Residues 21–28 (GRPNVGKS) are G1. GTP is bound at residue 21 to 28 (GRPNVGKS). Residues 47–51 (QTTRH) form a G2 region. The segment at 68–71 (DTPG) is G3. GTP is bound by residues 68 to 72 (DTPGL) and 130 to 133 (NKID). Residues 130 to 133 (NKID) form a G4 region. A G5 region spans residues 160-162 (ISA). Positions 212–289 (TGDELPYSVT…HLELWVKVKS (78 aa)) constitute a KH type-2 domain.

It belongs to the TRAFAC class TrmE-Era-EngA-EngB-Septin-like GTPase superfamily. Era GTPase family. Monomer.

The protein localises to the cytoplasm. The protein resides in the cell inner membrane. In terms of biological role, an essential GTPase that binds both GDP and GTP, with rapid nucleotide exchange. Plays a role in 16S rRNA processing and 30S ribosomal subunit biogenesis and possibly also in cell cycle regulation and energy metabolism. This chain is GTPase Era, found in Pasteurella multocida (strain Pm70).